An 867-amino-acid chain; its full sequence is Valine--tRNA ligase (867 aa).

Residues 42–52 (PNITGKIHMGH) carry the 'HIGH' region motif. A 'KMSKS' region motif is present at residues 521–525 (KMSKS). ATP is bound at residue Lys524. A coiled-coil region spans residues 794-867 (LGTLIDVKSE…QIISDLEAKA (74 aa)).

This sequence belongs to the class-I aminoacyl-tRNA synthetase family. ValS type 1 subfamily. In terms of assembly, monomer.

The protein resides in the cytoplasm. It carries out the reaction tRNA(Val) + L-valine + ATP = L-valyl-tRNA(Val) + AMP + diphosphate. Its function is as follows. Catalyzes the attachment of valine to tRNA(Val). As ValRS can inadvertently accommodate and process structurally similar amino acids such as threonine, to avoid such errors, it has a 'posttransfer' editing activity that hydrolyzes mischarged Thr-tRNA(Val) in a tRNA-dependent manner. The sequence is that of Valine--tRNA ligase from Fervidobacterium nodosum (strain ATCC 35602 / DSM 5306 / Rt17-B1).